Consider the following 892-residue polypeptide: Putative disease resistance protein At4g10780 (892 aa).

Residues 24–63 (SLGNYIHKLKDNIVALEKAIEDLTATRDDVLRRVQMEEGK) adopt a coiled-coil conformation. The region spanning 137–440 (IVAAPAPKLE…ICEGFIDGNI (304 aa)) is the NB-ARC domain. An ATP-binding site is contributed by 180-187 (GMGGVGKT). LRR repeat units follow at residues 515 to 536 (AVRR…PECP), 537 to 559 (ELTT…FFRH), 562 to 584 (KLVV…ISEL), 586 to 608 (ALRY…QDLK), 609 to 631 (TLIH…SKLS), and 632 to 654 (SLRT…KELH).

It belongs to the disease resistance NB-LRR family.

Functionally, potential disease resistance protein. This is Putative disease resistance protein At4g10780 from Arabidopsis thaliana (Mouse-ear cress).